We begin with the raw amino-acid sequence, 367 residues long: Chorismate synthase (367 aa).

Position 48 (R48) interacts with NADP(+). FMN contacts are provided by residues 125 to 127 (RSS), G284, 299 to 303 (KPTPS), and R325.

The protein belongs to the chorismate synthase family. As to quaternary structure, homotetramer. Requires FMNH2 as cofactor.

The catalysed reaction is 5-O-(1-carboxyvinyl)-3-phosphoshikimate = chorismate + phosphate. It functions in the pathway metabolic intermediate biosynthesis; chorismate biosynthesis; chorismate from D-erythrose 4-phosphate and phosphoenolpyruvate: step 7/7. Functionally, catalyzes the anti-1,4-elimination of the C-3 phosphate and the C-6 proR hydrogen from 5-enolpyruvylshikimate-3-phosphate (EPSP) to yield chorismate, which is the branch point compound that serves as the starting substrate for the three terminal pathways of aromatic amino acid biosynthesis. This reaction introduces a second double bond into the aromatic ring system. This is Chorismate synthase from Lachnoclostridium phytofermentans (strain ATCC 700394 / DSM 18823 / ISDg) (Clostridium phytofermentans).